The chain runs to 242 residues: GATA zinc finger domain-containing protein 1 (242 aa).

A GATA-type zinc finger spans residues 9–33 (CAVCKTQSSSMWKKGNQGEILCNGC). Residues 44–85 (GASASSTIQQNNGGGKQSKQEIHRRSARLRSTKYKAPASEKK) form a disordered region. Positions 45-54 (ASASSTIQQN) are enriched in low complexity.

The protein resides in the nucleus. Functionally, component of some chromatin complex recruited to chromatin sites methylated 'Lys-4' of histone H3 (H3K4me), with a preference for trimethylated form (H3K4me3). This chain is GATA zinc finger domain-containing protein 1 (gatad1), found in Danio rerio (Zebrafish).